Consider the following 214-residue polypeptide: Charged multivesicular body protein 2b (214 aa).

A coiled-coil region spans residues 16-55 (EQNKELRGTQRAITRDRAALEKQEKQLEMEIKKMAKAGNK). The interval 178–203 (MAKAPSAAKGLPSTSASKSSGISDEE) is disordered. The span at 189 to 199 (PSTSASKSSGI) shows a compositional bias: polar residues. An MIT-interacting motif motif is present at residues 202 to 212 (EEIERQLKALG).

The protein belongs to the SNF7 family. As to quaternary structure, probable core component of the endosomal sorting required for transport complex III (ESCRT-III). ESCRT-III components are thought to multimerize to form a flat lattice on the perimeter membrane of the endosome.

The protein localises to the cytoplasm. Its subcellular location is the cytosol. It localises to the late endosome membrane. Functionally, probable core component of the endosomal sorting required for transport complex III (ESCRT-III) which is involved in multivesicular bodies (MVBs) formation and sorting of endosomal cargo proteins into MVBs. MVBs contain intraluminal vesicles (ILVs) that are generated by invagination and scission from the limiting membrane of the endosome and mostly are delivered to lysosomes enabling degradation of membrane proteins, such as stimulated growth factor receptors, lysosomal enzymes and lipids. In Xenopus tropicalis (Western clawed frog), this protein is Charged multivesicular body protein 2b (chmp2b).